A 201-amino-acid chain; its full sequence is Recombination protein RecR (201 aa).

A C4-type zinc finger spans residues 57-72; that stretch reads CADCRTFTEQDVCNIC. One can recognise a Toprim domain in the interval 81 to 176; it reads GQICVVESPA…EASRIAHGVP (96 aa).

Belongs to the RecR family.

Its function is as follows. May play a role in DNA repair. It seems to be involved in an RecBC-independent recombinational process of DNA repair. It may act with RecF and RecO. The sequence is that of Recombination protein RecR from Salmonella agona (strain SL483).